The primary structure comprises 223 residues: 7-cyano-7-deazaguanine synthase (223 aa).

8–18 (LSGGLDSATTL) lines the ATP pocket. Zn(2+) contacts are provided by Cys-187, Cys-197, Cys-200, and Cys-203.

The protein belongs to the QueC family. Requires Zn(2+) as cofactor.

It carries out the reaction 7-carboxy-7-deazaguanine + NH4(+) + ATP = 7-cyano-7-deazaguanine + ADP + phosphate + H2O + H(+). Its pathway is purine metabolism; 7-cyano-7-deazaguanine biosynthesis. Catalyzes the ATP-dependent conversion of 7-carboxy-7-deazaguanine (CDG) to 7-cyano-7-deazaguanine (preQ(0)). The sequence is that of 7-cyano-7-deazaguanine synthase from Methylococcus capsulatus (strain ATCC 33009 / NCIMB 11132 / Bath).